Here is a 716-residue protein sequence, read N- to C-terminus: Fatty acid oxidation complex subunit alpha (716 aa).

The interval 1–189 (MIYQSPTIQV…KVGAIDAVVA (189 aa)) is enoyl-CoA hydratase/isomerase. Asp-296 provides a ligand contact to substrate. The segment at 311-716 (QAVNSAAVLG…AATNGSYYPA (406 aa)) is 3-hydroxyacyl-CoA dehydrogenase. Residues Met-324, Asp-343, 400–402 (VVE), Lys-407, and Ser-429 contribute to the NAD(+) site. The active-site For 3-hydroxyacyl-CoA dehydrogenase activity is His-450. Asn-453 is an NAD(+) binding site. Substrate is bound by residues Asn-500 and Tyr-660.

The protein in the N-terminal section; belongs to the enoyl-CoA hydratase/isomerase family. It in the C-terminal section; belongs to the 3-hydroxyacyl-CoA dehydrogenase family. As to quaternary structure, heterotetramer of two alpha chains (FadB) and two beta chains (FadA).

The catalysed reaction is a (3S)-3-hydroxyacyl-CoA + NAD(+) = a 3-oxoacyl-CoA + NADH + H(+). It carries out the reaction a (3S)-3-hydroxyacyl-CoA = a (2E)-enoyl-CoA + H2O. It catalyses the reaction a 4-saturated-(3S)-3-hydroxyacyl-CoA = a (3E)-enoyl-CoA + H2O. The enzyme catalyses (3S)-3-hydroxybutanoyl-CoA = (3R)-3-hydroxybutanoyl-CoA. The catalysed reaction is a (3Z)-enoyl-CoA = a 4-saturated (2E)-enoyl-CoA. It carries out the reaction a (3E)-enoyl-CoA = a 4-saturated (2E)-enoyl-CoA. It participates in lipid metabolism; fatty acid beta-oxidation. In terms of biological role, involved in the aerobic and anaerobic degradation of long-chain fatty acids via beta-oxidation cycle. Catalyzes the formation of 3-oxoacyl-CoA from enoyl-CoA via L-3-hydroxyacyl-CoA. It can also use D-3-hydroxyacyl-CoA and cis-3-enoyl-CoA as substrate. The polypeptide is Fatty acid oxidation complex subunit alpha (Shewanella loihica (strain ATCC BAA-1088 / PV-4)).